A 198-amino-acid chain; its full sequence is MAFELPPLPYAHDALQPHISKETLEFHHDKHHNTYVVNLNNLVPGTEFEGKTLEEIVKTSSGGIFNNAAQVWNHTFYWNCLAPNAGGQPTGALADAINAAFGSFDKFKEEFTKTSVGTFGSGWGWLVKKADGSLALASTIGAGCPLTSGDTPLLTCDVWEHAYYIDYRNLRPKYVEAFWNLVNWAFVAEQFEGKTFKA.

The Fe(3+) site is built by histidine 27, histidine 74, aspartate 157, and histidine 161.

Belongs to the iron/manganese superoxide dismutase family. In terms of assembly, homodimer. Fe(3+) is required as a cofactor.

The catalysed reaction is 2 superoxide + 2 H(+) = H2O2 + O2. In terms of biological role, destroys superoxide anion radicals which are normally produced within the cells and which are toxic to biological systems. In Pseudomonas putida (Arthrobacter siderocapsulatus), this protein is Superoxide dismutase [Fe] (sodB).